The sequence spans 78 residues: Serine rich endogenous peptide 12 (78 aa).

Residues 1-24 (MRNTISSKMGQVLIVLLLLCTVLC) form the signal peptide. A propeptide spans 25–43 (RTESALPSGQHSVLLTGRR) (removed in mature form). The tract at residues 47-78 (SGASGPVRSSQSSQAGGRFNDADPIAIDYGKY) is disordered. An SCOOP motif motif is present at residues 50–64 (SGPVRSSQSSQAGGR). The SxS motif essential for MIK2 binding signature appears at 56 to 58 (SQS).

Belongs to the serine rich endogenous peptide (SCOOP) phytocytokine family. As to quaternary structure, interacts with MIK2 (via extracellular leucine-rich repeat domain); this interaction triggers the formation of complex between MIK2 and the BAK1/SERK3 and SERK4 coreceptors, and subsequent BAK1 activation by phosphorylation on 'Ser-612'. As to expression, mostly expressed in the whole root system, and, to a lower extent, in seedlings shoots.

The protein localises to the cell membrane. Its subcellular location is the secreted. It localises to the extracellular space. The protein resides in the apoplast. In terms of biological role, brassicaceae-specific phytocytokine (plant endogenous peptide released into the apoplast) perceived by MIK2 in a BAK1/SERK3 and SERK4 coreceptors-dependent manner, that modulates various physiological and antimicrobial processes including root growth prevention, phospholipid signaling pathway activation (e.g. accumulation of phosphatidic acid (PA), but transient reduction of phosphatidylinositol 4,5-bisphosphate (PIP(2)) levels) and reactive oxygen species (ROS) response regulation. Moderates primary root growth, and regulates root meristems and cell elongation; this root growth regulation is associated with the modulation of ROS metabolism and alteration of cell wall structure, and depends on variations in many genes expression. Promotes ROS (e.g. superoxide anion O(2) and hydrogen peroxide H(2)O(2)) production and MAPK (e.g. MPK3, MPK4 and MPK6) activation in a MIK2-dependent manner, thus leading to the up-regulation of immune-related marker genes (e.g. WRKY30, WRKY33 and CYP81F2). Involved in biotic and oxidative stress responses; acts as a negative regulator of defense against necrotrophic pathogens such as the bacteria Erwinia amylovora and the fungus Alternaria brassicicola. Able to prime defense responses against the pathogenic bacteria Pseudomonas syringae pv. tomato DC3000. Contributes to the triggering of defense responses toward generalist herbivores such as Spodoptera littoralis, probably via the activation of jasmonate and indole glucosinolate biosynthesis. Triggers the expression of several PROSCOOP genes (e.g. PROSCOOP3, PROSCOOP7, PROSCOOP12 and PROSCOOP13). The polypeptide is Serine rich endogenous peptide 12 (Arabidopsis thaliana (Mouse-ear cress)).